The primary structure comprises 309 residues: Homoserine O-succinyltransferase (309 aa).

The active-site Acyl-thioester intermediate is Cys142. Residues Lys163 and Ser192 each coordinate substrate. The active-site Proton acceptor is the His235. The active site involves Glu237. Arg249 contacts substrate.

Belongs to the MetA family.

It localises to the cytoplasm. The enzyme catalyses L-homoserine + succinyl-CoA = O-succinyl-L-homoserine + CoA. Its pathway is amino-acid biosynthesis; L-methionine biosynthesis via de novo pathway; O-succinyl-L-homoserine from L-homoserine: step 1/1. In terms of biological role, transfers a succinyl group from succinyl-CoA to L-homoserine, forming succinyl-L-homoserine. The sequence is that of Homoserine O-succinyltransferase from Edwardsiella ictaluri (strain 93-146).